The following is a 172-amino-acid chain: Small ribosomal subunit protein uS5 (172 aa).

In terms of domain architecture, S5 DRBM spans 16–79 (LKEKLVHINR…EDGKKNVVKV (64 aa)).

The protein belongs to the universal ribosomal protein uS5 family. In terms of assembly, part of the 30S ribosomal subunit. Contacts proteins S4 and S8.

Its function is as follows. With S4 and S12 plays an important role in translational accuracy. Functionally, located at the back of the 30S subunit body where it stabilizes the conformation of the head with respect to the body. This is Small ribosomal subunit protein uS5 from Prosthecochloris aestuarii (strain DSM 271 / SK 413).